The chain runs to 257 residues: MSVATRVIACLDVDDGRVVKGVNFENLRDAGDPVELAAAYDAEGVDELTFLDVTASSSGRATMLDVVRRTAEQVFIPLTVGGGVRSVDDVNVLLRAGADKVGVNTAAIARPELLAELAQRFGSQCIVLSVDARRVRDGDVPTSSGWEVTTHGGRRGTGIDAIEWTSRGAELGVGEILLNSMDADGTKAGFDLEMIAAARAAVDVPVIASGGAGAIGHFAPAVQAGADAVLAASVFHFRELTIGEVKAAMAAEGITVR.

Catalysis depends on residues D12 and D131.

The protein belongs to the HisA/HisF family. As to quaternary structure, heterodimer of HisH and HisF.

The protein resides in the cytoplasm. The enzyme catalyses 5-[(5-phospho-1-deoxy-D-ribulos-1-ylimino)methylamino]-1-(5-phospho-beta-D-ribosyl)imidazole-4-carboxamide + L-glutamine = D-erythro-1-(imidazol-4-yl)glycerol 3-phosphate + 5-amino-1-(5-phospho-beta-D-ribosyl)imidazole-4-carboxamide + L-glutamate + H(+). It functions in the pathway amino-acid biosynthesis; L-histidine biosynthesis; L-histidine from 5-phospho-alpha-D-ribose 1-diphosphate: step 5/9. In terms of biological role, IGPS catalyzes the conversion of PRFAR and glutamine to IGP, AICAR and glutamate. The HisF subunit catalyzes the cyclization activity that produces IGP and AICAR from PRFAR using the ammonia provided by the HisH subunit. In Mycobacteroides abscessus (strain ATCC 19977 / DSM 44196 / CCUG 20993 / CIP 104536 / JCM 13569 / NCTC 13031 / TMC 1543 / L948) (Mycobacterium abscessus), this protein is Imidazole glycerol phosphate synthase subunit HisF.